The sequence spans 548 residues: Alpha-humulene synthase (548 aa).

Mg(2+)-binding residues include Asp302, Asp306, and Glu453. The short motif at 302-306 (DDIYD) is the DDXXD motif element.

The protein belongs to the terpene synthase family. In terms of tissue distribution, mostly expressed in rhizomes.

The enzyme catalyses (2E,6E)-farnesyl diphosphate = alpha-humulene + diphosphate. Its function is as follows. Catalyzes the formation of alpha-humulene in the first step of zerumbone biosynthesis, a highly promising multi-anticancer agent. Also mediates formation of beta-caryophyllene at a much lower level. This Zingiber zerumbet (Shampoo ginger) protein is Alpha-humulene synthase (ZSS1).